Consider the following 85-residue polypeptide: uncharacterized protein (85 aa).

The N-terminal stretch at 1–35 (MIEDPSKKISLWQKWINVDPKKRILFSLGLFALSA) is a signal peptide.

The protein resides in the secreted. This is an uncharacterized protein from Dictyostelium discoideum (Social amoeba).